A 412-amino-acid polypeptide reads, in one-letter code: MAQLDPKTINKIVLAYSGGLDTSIIARWLQETYDAEVITFTADIGQGEEVEPARAKAEAMGIKHIHIEDLREEFARDYVFPMFRANAIYEGEYLLGTSIARPLIAKRLVEIAKEHNADAISHGATGKGNDQVRFELGAVALSPDVVTIAPWREWDLSSRESLMEYAKEHNISIDYAGNKKKSPYSMDANLLHISYEGGILEDPYAEAEDDMWRWSVSPEQAPDVPQYLELEYAKGDIVAIDGEALKPYEVMIKLNEIGGKHGIGRLDIVENRYVGMKSRGCYETPAGTIMLKAHRGIESLTLDREAAHLKDELMPRYAKTIYNGYWFSPERMMLQALIDKSQEYVNGTVRVKLYKGAVSVVGRKSDDSLFDEKIATFEDDAGAYDQKDAEGFIRLNGLRLAIEASRGRDLSK.

Residues 15 to 23 (AYSGGLDTS) and Ala-42 each bind ATP. L-citrulline is bound by residues Tyr-93 and Ser-98. Gly-123 provides a ligand contact to ATP. Thr-125, Asn-129, and Asp-130 together coordinate L-aspartate. An L-citrulline-binding site is contributed by Asn-129. Arg-133, Ser-185, Ser-194, Glu-270, and Tyr-282 together coordinate L-citrulline.

The protein belongs to the argininosuccinate synthase family. Type 1 subfamily. As to quaternary structure, homotetramer.

It localises to the cytoplasm. It carries out the reaction L-citrulline + L-aspartate + ATP = 2-(N(omega)-L-arginino)succinate + AMP + diphosphate + H(+). Its pathway is amino-acid biosynthesis; L-arginine biosynthesis; L-arginine from L-ornithine and carbamoyl phosphate: step 2/3. The chain is Argininosuccinate synthase from Psychrobacter arcticus (strain DSM 17307 / VKM B-2377 / 273-4).